A 303-amino-acid polypeptide reads, in one-letter code: Aspartate carbamoyltransferase catalytic subunit (303 aa).

Carbamoyl phosphate-binding residues include Arg49 and Thr50. Residue Lys77 coordinates L-aspartate. The carbamoyl phosphate site is built by Arg99, His126, and Gln129. Positions 159 and 211 each coordinate L-aspartate. Ser252 and Pro253 together coordinate carbamoyl phosphate.

This sequence belongs to the aspartate/ornithine carbamoyltransferase superfamily. ATCase family. In terms of assembly, heterododecamer (2C3:3R2) of six catalytic PyrB chains organized as two trimers (C3), and six regulatory PyrI chains organized as three dimers (R2).

It catalyses the reaction carbamoyl phosphate + L-aspartate = N-carbamoyl-L-aspartate + phosphate + H(+). The protein operates within pyrimidine metabolism; UMP biosynthesis via de novo pathway; (S)-dihydroorotate from bicarbonate: step 2/3. Catalyzes the condensation of carbamoyl phosphate and aspartate to form carbamoyl aspartate and inorganic phosphate, the committed step in the de novo pyrimidine nucleotide biosynthesis pathway. This chain is Aspartate carbamoyltransferase catalytic subunit, found in Listeria monocytogenes serovar 1/2a (strain ATCC BAA-679 / EGD-e).